The following is a 323-amino-acid chain: Aspartate carbamoyltransferase catalytic subunit (323 aa).

Carbamoyl phosphate contacts are provided by Arg-71 and Thr-72. Lys-99 lines the L-aspartate pocket. Arg-121, His-151, and Gln-154 together coordinate carbamoyl phosphate. L-aspartate-binding residues include Arg-184 and Arg-239. The carbamoyl phosphate site is built by Gly-280 and Pro-281.

Belongs to the aspartate/ornithine carbamoyltransferase superfamily. ATCase family. Heterododecamer (2C3:3R2) of six catalytic PyrB chains organized as two trimers (C3), and six regulatory PyrI chains organized as three dimers (R2).

The catalysed reaction is carbamoyl phosphate + L-aspartate = N-carbamoyl-L-aspartate + phosphate + H(+). It functions in the pathway pyrimidine metabolism; UMP biosynthesis via de novo pathway; (S)-dihydroorotate from bicarbonate: step 2/3. Functionally, catalyzes the condensation of carbamoyl phosphate and aspartate to form carbamoyl aspartate and inorganic phosphate, the committed step in the de novo pyrimidine nucleotide biosynthesis pathway. The protein is Aspartate carbamoyltransferase catalytic subunit of Ralstonia pickettii (strain 12J).